The sequence spans 1324 residues: RNA2 polyprotein (1324 aa).

It belongs to the nepoviruses RNA2 polyprotein family. Specific enzymatic cleavages in vivo by the P1 encoded 3C-like protease yield mature proteins. Post-translationally, the N-terminus of the coat protein is blocked.

The protein localises to the host cell junction. The protein resides in the host plasmodesma. It localises to the host cytoplasm. Its subcellular location is the host nucleus. It is found in the virion. Implicated in RNA2 replication. Could also be required for nematode transmission of the virus. Functionally, transports viral genome to neighboring plant cells directly through plasmosdesmata, without any budding. The movement protein allows efficient cell to cell propagation, by bypassing the host cell wall barrier. Acts by forming a tubular structure at the host plasmodesmata, enlarging it enough to allow free passage of virion capsids. This Apium graveolens (Celery) protein is RNA2 polyprotein.